We begin with the raw amino-acid sequence, 454 residues long: Tyrosine aminotransferase (454 aa).

Position 1 is an N-acetylmethionine (methionine 1). Lysine 280 bears the N6-(pyridoxal phosphate)lysine mark. The residue at position 448 (serine 448) is a Phosphoserine.

It belongs to the class-I pyridoxal-phosphate-dependent aminotransferase family. As to quaternary structure, homodimer. The cofactor is pyridoxal 5'-phosphate.

It catalyses the reaction L-tyrosine + 2-oxoglutarate = 3-(4-hydroxyphenyl)pyruvate + L-glutamate. It participates in amino-acid degradation; L-phenylalanine degradation; acetoacetate and fumarate from L-phenylalanine: step 2/6. Functionally, transaminase involved in tyrosine breakdown. Converts tyrosine to p-hydroxyphenylpyruvate. Can catalyze the reverse reaction, using glutamic acid, with 2-oxoglutarate as cosubstrate (in vitro). Has much lower affinity and transaminase activity for phenylalanine. In Mus musculus (Mouse), this protein is Tyrosine aminotransferase (Tat).